A 364-amino-acid polypeptide reads, in one-letter code: Probable mannose-1-phosphate guanylyltransferase 2 (364 aa).

GDP-alpha-D-mannose-binding residues include leucine 6 and valine 7. Glycine 9, glycine 11, threonine 12, arginine 13, and lysine 23 together coordinate diphosphate. GDP-alpha-D-mannose-binding residues include glycine 88, asparagine 112, aspartate 114, glycine 149, and asparagine 176.

This sequence belongs to the transferase hexapeptide repeat family.

It catalyses the reaction alpha-D-mannose 1-phosphate + GTP + H(+) = GDP-alpha-D-mannose + diphosphate. It participates in nucleotide-sugar biosynthesis; GDP-alpha-D-mannose biosynthesis; GDP-alpha-D-mannose from alpha-D-mannose 1-phosphate (GTP route): step 1/1. Functionally, catalyzes a reaction of the Smirnoff-Wheeler pathway, the major route to ascorbate biosynthesis in plants. This chain is Probable mannose-1-phosphate guanylyltransferase 2, found in Arabidopsis thaliana (Mouse-ear cress).